The primary structure comprises 59 residues: Large ribosomal subunit protein uL30 (59 aa).

It belongs to the universal ribosomal protein uL30 family. In terms of assembly, part of the 50S ribosomal subunit.

This chain is Large ribosomal subunit protein uL30, found in Stutzerimonas stutzeri (strain A1501) (Pseudomonas stutzeri).